Consider the following 717-residue polypeptide: Probable inactive histone-lysine N-methyltransferase SUVR2 (717 aa).

Residues 61–73 are compositionally biased toward basic and acidic residues; sequence QAIQESEEKKADE. Residues 61–136 form a disordered region; the sequence is QAIQESEEKK…LGSPTLEGPS (76 aa). The segment covering 120 to 130 has biased composition (low complexity); sequence SALASPSLGSP. Cys445, Cys446, Cys449, Cys453, Cys462, Cys529, Cys533, Cys535, and Cys539 together coordinate Zn(2+). In terms of domain architecture, Pre-SET spans 458-547; the sequence is MACRCATAFN…NCGNRVVQQG (90 aa). The SET domain maps to 550–679; the sequence is NKLQVFFTPN…AMEELTWDYG (130 aa). S-adenosyl-L-methionine is bound by residues 561 to 563 and 635 to 636; these read RGW and NH. Cys638 lines the Zn(2+) pocket. Tyr678 contributes to the S-adenosyl-L-methionine binding site. One can recognise a Post-SET domain in the interval 690–706; that stretch reads SPFHCQCGSDFCRVRKQ. Residues Cys694, Cys696, and Cys701 each contribute to the Zn(2+) site.

The protein belongs to the class V-like SAM-binding methyltransferase superfamily. Histone-lysine methyltransferase family. Interacts with SUVR1, CHR19, CHR28 and itself. Interacts with CHR27.

The protein resides in the nucleus. It is found in the chromosome. Its function is as follows. Probable inactive histone-lysine methyltransferase that acts as regulator of transctiptional gene silencing independently of histone H3K9 methylation. Contributes to transcriptional gene silencing at RNA-directed DNA methylation (RdDM) target loci but also at RdDM-independent target loci. Forms a complex with SUVR1 and associates with the SNF2-related chromatin-remodeling proteins CHR19, CHR27, and CHR28, thereby mediating nucleosome positioning and transcriptional silencing. Does not possess histone-lysine methyltransferase activity in vitro, and the conserved catalytic sites of SUVR2 are dispensable for its function in transcriptional gene silencing. This Arabidopsis thaliana (Mouse-ear cress) protein is Probable inactive histone-lysine N-methyltransferase SUVR2 (SUVR2).